The chain runs to 314 residues: Ribosomal RNA small subunit methyltransferase H (314 aa).

Residues 34–36 (GGH), Asp53, Phe82, Asp103, and Gln110 contribute to the S-adenosyl-L-methionine site.

The protein belongs to the methyltransferase superfamily. RsmH family.

It is found in the cytoplasm. The enzyme catalyses cytidine(1402) in 16S rRNA + S-adenosyl-L-methionine = N(4)-methylcytidine(1402) in 16S rRNA + S-adenosyl-L-homocysteine + H(+). Specifically methylates the N4 position of cytidine in position 1402 (C1402) of 16S rRNA. The protein is Ribosomal RNA small subunit methyltransferase H of Limosilactobacillus fermentum (strain NBRC 3956 / LMG 18251) (Lactobacillus fermentum).